Reading from the N-terminus, the 403-residue chain is Forkhead box protein Q1 (403 aa).

Disordered regions lie at residues 1–75 and 94–116; these read MKLE…PGAE and GAAGPGAGGAGSGEGARSKPYTR. Over residues 32–48 the composition is skewed to low complexity; that stretch reads LSAAGDDSLGSDGDCAA. Over residues 96-107 the composition is skewed to gly residues; sequence AGPGAGGAGSGE. The segment at residues 119 to 214 is a DNA-binding region (fork-head); it reads KPPYSYIALI…ADGVFRRRRK (96 aa). A disordered region spans residues 216–266; sequence LSHRAPVPAPGLRPEEAPGLPAAPPPAPAAPASPRMRSPARQEERASPAGK. Residues 236–246 are compositionally biased toward pro residues; the sequence is PAAPPPAPAAP.

In terms of tissue distribution, expressed predominantly in the stomach, trachea, bladder and salivary gland.

The protein resides in the nucleus. Functionally, plays a role in hair follicle differentiation. The protein is Forkhead box protein Q1 (FOXQ1) of Homo sapiens (Human).